A 195-amino-acid polypeptide reads, in one-letter code: Dephospho-CoA kinase (195 aa).

In terms of domain architecture, DPCK spans 2–195 (IIGLTGGIGV…DIVDSLSLSS (194 aa)). An ATP-binding site is contributed by 10–15 (GVGKSF).

The protein belongs to the CoaE family.

The protein resides in the cytoplasm. It catalyses the reaction 3'-dephospho-CoA + ATP = ADP + CoA + H(+). It participates in cofactor biosynthesis; coenzyme A biosynthesis; CoA from (R)-pantothenate: step 5/5. In terms of biological role, catalyzes the phosphorylation of the 3'-hydroxyl group of dephosphocoenzyme A to form coenzyme A. This Wolbachia sp. subsp. Brugia malayi (strain TRS) protein is Dephospho-CoA kinase.